Here is a 315-residue protein sequence, read N- to C-terminus: Homoserine kinase (315 aa).

97–107 (PPARGLGSSAT) provides a ligand contact to ATP.

It belongs to the GHMP kinase family. Homoserine kinase subfamily.

The protein resides in the cytoplasm. It catalyses the reaction L-homoserine + ATP = O-phospho-L-homoserine + ADP + H(+). It participates in amino-acid biosynthesis; L-threonine biosynthesis; L-threonine from L-aspartate: step 4/5. In terms of biological role, catalyzes the ATP-dependent phosphorylation of L-homoserine to L-homoserine phosphate. The protein is Homoserine kinase of Synechococcus sp. (strain CC9902).